A 403-amino-acid polypeptide reads, in one-letter code: NADH-quinone oxidoreductase subunit D (403 aa).

Belongs to the complex I 49 kDa subunit family. NDH-1 is composed of 15 different subunits. Subunits NuoB, C, D, E, F, and G constitute the peripheral sector of the complex.

Its subcellular location is the cell membrane. It catalyses the reaction a quinone + NADH + 5 H(+)(in) = a quinol + NAD(+) + 4 H(+)(out). In terms of biological role, NDH-1 shuttles electrons from NADH, via FMN and iron-sulfur (Fe-S) centers, to quinones in the respiratory chain. The immediate electron acceptor for the enzyme in this species is believed to be a menaquinone. Couples the redox reaction to proton translocation (for every two electrons transferred, four hydrogen ions are translocated across the cytoplasmic membrane), and thus conserves the redox energy in a proton gradient. The chain is NADH-quinone oxidoreductase subunit D from Deinococcus geothermalis (strain DSM 11300 / CIP 105573 / AG-3a).